Reading from the N-terminus, the 1206-residue chain is Cilia- and flagella-associated protein 157 (1206 aa).

Disordered regions lie at residues G26 to L52, R79 to P109, E125 to L173, and G327 to W405. Composition is skewed to low complexity over residues G88–P109, A156–L173, and Q385–G397. Coiled coils occupy residues T634–D732, T799–R833, and L876–E903. 3 disordered regions span residues T936–S990, L1011–S1072, and P1168–V1206. Low complexity-rich tracts occupy residues A951–A973 and G1014–G1035. Gly residues-rich tracts occupy residues W1037 to R1046 and S1058 to G1067. Polar residues-rich tracts occupy residues Q1175 to S1184 and G1193 to V1206.

It belongs to the CFAP157 family.

It is found in the cell projection. The protein localises to the cilium. The protein resides in the flagellum. The protein is Cilia- and flagella-associated protein 157 of Chlamydomonas reinhardtii (Chlamydomonas smithii).